Consider the following 383-residue polypeptide: Putative glutamate--cysteine ligase 2-1 (383 aa).

Belongs to the glutamate--cysteine ligase type 2 family. YbdK subfamily.

It catalyses the reaction L-cysteine + L-glutamate + ATP = gamma-L-glutamyl-L-cysteine + ADP + phosphate + H(+). Functionally, ATP-dependent carboxylate-amine ligase which exhibits weak glutamate--cysteine ligase activity. The polypeptide is Putative glutamate--cysteine ligase 2-1 (Arthrobacter sp. (strain FB24)).